A 111-amino-acid polypeptide reads, in one-letter code: Ribosome-binding factor A (111 aa).

It belongs to the RbfA family. Monomer. Binds 30S ribosomal subunits, but not 50S ribosomal subunits or 70S ribosomes.

The protein resides in the cytoplasm. Functionally, one of several proteins that assist in the late maturation steps of the functional core of the 30S ribosomal subunit. Associates with free 30S ribosomal subunits (but not with 30S subunits that are part of 70S ribosomes or polysomes). Required for efficient processing of 16S rRNA. May interact with the 5'-terminal helix region of 16S rRNA. This is Ribosome-binding factor A from Helicobacter pylori (strain J99 / ATCC 700824) (Campylobacter pylori J99).